The chain runs to 482 residues: Glutamyl-tRNA(Gln) amidotransferase subunit A (482 aa).

Catalysis depends on charge relay system residues K75 and S150. The active-site Acyl-ester intermediate is the S174.

Belongs to the amidase family. GatA subfamily. In terms of assembly, heterotrimer of A, B and C subunits.

It catalyses the reaction L-glutamyl-tRNA(Gln) + L-glutamine + ATP + H2O = L-glutaminyl-tRNA(Gln) + L-glutamate + ADP + phosphate + H(+). In terms of biological role, allows the formation of correctly charged Gln-tRNA(Gln) through the transamidation of misacylated Glu-tRNA(Gln) in organisms which lack glutaminyl-tRNA synthetase. The reaction takes place in the presence of glutamine and ATP through an activated gamma-phospho-Glu-tRNA(Gln). This chain is Glutamyl-tRNA(Gln) amidotransferase subunit A, found in Deinococcus radiodurans (strain ATCC 13939 / DSM 20539 / JCM 16871 / CCUG 27074 / LMG 4051 / NBRC 15346 / NCIMB 9279 / VKM B-1422 / R1).